We begin with the raw amino-acid sequence, 293 residues long: Ethanolamine ammonia-lyase small subunit (293 aa).

Adenosylcob(III)alamin is bound by residues Val-207 and Glu-228.

The protein belongs to the EutC family. As to quaternary structure, the basic unit is a heterodimer which dimerizes to form tetramers. The heterotetramers trimerize; 6 large subunits form a core ring with 6 small subunits projecting outwards. Adenosylcob(III)alamin serves as cofactor.

The protein localises to the bacterial microcompartment. The catalysed reaction is ethanolamine = acetaldehyde + NH4(+). Its pathway is amine and polyamine degradation; ethanolamine degradation. Its function is as follows. Catalyzes the deamination of various vicinal amino-alcohols to oxo compounds. Allows this organism to utilize ethanolamine as the sole source of nitrogen and carbon in the presence of external vitamin B12. The protein is Ethanolamine ammonia-lyase small subunit of Listeria monocytogenes serovar 1/2a (strain ATCC BAA-679 / EGD-e).